We begin with the raw amino-acid sequence, 224 residues long: UPF0758 protein VIBHAR_00653 (224 aa).

Residues 102-224 (ALTSPEQTKL…SVSFAERGWI (123 aa)) enclose the MPN domain. The Zn(2+) site is built by His-173, His-175, and Asp-186. A JAMM motif motif is present at residues 173–186 (HNHPSGVAEPSQAD).

The protein belongs to the UPF0758 family.

The sequence is that of UPF0758 protein VIBHAR_00653 from Vibrio campbellii (strain ATCC BAA-1116).